The sequence spans 209 residues: MTYCSKANQPSYPFILPDLPYDKESFKPHFTRETFDYHHGKHHNSYVQNLNNLIKDREELQKKDLEEIIEWSSQNAEVAILNNASQIWNHTFFWYSIKPHGGGKPSGKVFEQISKDFGSFEQFCAQFKQEAVGQFGSGWTWVVYHDNKLQIIKTSNAGTPIVNFMKPILACDVWEHAYYIDYRNKRSDYIDIFIRHMINWKFVEDNLIQ.

H38, H90, D172, and H176 together coordinate Fe(3+). The Mn(2+) site is built by H38, H90, D172, and H176.

Belongs to the iron/manganese superoxide dismutase family. Mn(2+) is required as a cofactor. It depends on Fe(3+) as a cofactor.

It catalyses the reaction 2 superoxide + 2 H(+) = H2O2 + O2. In terms of biological role, destroys superoxide anion radicals which are normally produced within the cells and which are toxic to biological systems. Catalyzes the dismutation of superoxide anion radicals into O2 and H2O2 by successive reduction and oxidation of the transition metal ion at the active site. The chain is Superoxide dismutase [Mn/Fe] (sodB) from Rickettsia prowazekii (strain Madrid E).